The chain runs to 196 residues: Holliday junction branch migration complex subunit RuvA (196 aa).

The segment at M1–H63 is domain I. Residues T64 to R142 form a domain II region. Residues K143 to Q148 are flexible linker. Residues Q148–K196 form a domain III region.

Belongs to the RuvA family. As to quaternary structure, homotetramer. Forms an RuvA(8)-RuvB(12)-Holliday junction (HJ) complex. HJ DNA is sandwiched between 2 RuvA tetramers; dsDNA enters through RuvA and exits via RuvB. An RuvB hexamer assembles on each DNA strand where it exits the tetramer. Each RuvB hexamer is contacted by two RuvA subunits (via domain III) on 2 adjacent RuvB subunits; this complex drives branch migration. In the full resolvosome a probable DNA-RuvA(4)-RuvB(12)-RuvC(2) complex forms which resolves the HJ.

It localises to the cytoplasm. In terms of biological role, the RuvA-RuvB-RuvC complex processes Holliday junction (HJ) DNA during genetic recombination and DNA repair, while the RuvA-RuvB complex plays an important role in the rescue of blocked DNA replication forks via replication fork reversal (RFR). RuvA specifically binds to HJ cruciform DNA, conferring on it an open structure. The RuvB hexamer acts as an ATP-dependent pump, pulling dsDNA into and through the RuvAB complex. HJ branch migration allows RuvC to scan DNA until it finds its consensus sequence, where it cleaves and resolves the cruciform DNA. The sequence is that of Holliday junction branch migration complex subunit RuvA from Streptococcus agalactiae serotype III (strain NEM316).